The sequence spans 67 residues: MGKIRQGFIKRVARELFNKYPNEFTRDFEHNKKKVQELTNVTSKKIRNRIAGYITKLVRMKEEGKIL.

It belongs to the eukaryotic ribosomal protein eS17 family.

The chain is Small ribosomal subunit protein eS17 from Pyrococcus horikoshii (strain ATCC 700860 / DSM 12428 / JCM 9974 / NBRC 100139 / OT-3).